Consider the following 405-residue polypeptide: Venom serine protease 34 (405 aa).

The first 35 residues, Met1–Thr35, serve as a signal peptide directing secretion. 2 disulfides stabilise this stretch: Cys42/Cys70 and Cys95/Cys111. Residues Cys42–Asp147 form the CUB domain. N-linked (GlcNAc...) asparagine glycosylation is present at Asn113. Residues Ile161–Pro397 form the Peptidase S1 domain. Residues Cys188 and Cys204 are joined by a disulfide bond. The active-site Charge relay system is the His203. N-linked (GlcNAc...) asparagine glycosylation is found at Asn209 and Asn229. Asp257 (charge relay system) is an active-site residue. 2 disulfides stabilise this stretch: Cys323–Cys336 and Cys345–Cys375. Ser349 acts as the Charge relay system in catalysis.

This sequence belongs to the peptidase S1 family. Expressed by the venom duct.

Its subcellular location is the secreted. This chain is Venom serine protease 34, found in Apis mellifera (Honeybee).